Reading from the N-terminus, the 404-residue chain is Argininosuccinate synthase (404 aa).

Residues 10–18 and alanine 38 each bind ATP; that span reads AYSGGVDTS. Tyrosine 89 lines the L-citrulline pocket. Glycine 119 serves as a coordination point for ATP. 3 residues coordinate L-aspartate: threonine 121, asparagine 125, and aspartate 126. Asparagine 125 is an L-citrulline binding site. L-citrulline is bound by residues arginine 129, serine 177, serine 186, glutamate 262, and tyrosine 274.

It belongs to the argininosuccinate synthase family. Type 1 subfamily. Homotetramer.

The protein resides in the cytoplasm. The enzyme catalyses L-citrulline + L-aspartate + ATP = 2-(N(omega)-L-arginino)succinate + AMP + diphosphate + H(+). It functions in the pathway amino-acid biosynthesis; L-arginine biosynthesis; L-arginine from L-ornithine and carbamoyl phosphate: step 2/3. The polypeptide is Argininosuccinate synthase (Prochlorococcus marinus (strain MIT 9215)).